A 136-amino-acid chain; its full sequence is Pleckstrin homology-like domain family A member 2 (136 aa).

The PH domain occupies 12–105 (ILKEGDLEKR…WNAEITLALV (94 aa)).

The protein belongs to the PHLDA2 family.

The protein localises to the cytoplasm. Its subcellular location is the membrane. Functionally, plays a role in regulating placenta growth. May act via its PH domain that competes with other PH domain-containing proteins, thereby preventing their binding to membrane lipids. The polypeptide is Pleckstrin homology-like domain family A member 2 (phlda2) (Xenopus tropicalis (Western clawed frog)).